Here is a 132-residue protein sequence, read N- to C-terminus: Small ribosomal subunit protein uS8 (132 aa).

Belongs to the universal ribosomal protein uS8 family. As to quaternary structure, part of the 30S ribosomal subunit. Contacts proteins S5 and S12.

Its function is as follows. One of the primary rRNA binding proteins, it binds directly to 16S rRNA central domain where it helps coordinate assembly of the platform of the 30S subunit. The chain is Small ribosomal subunit protein uS8 from Bacillus licheniformis (strain ATCC 14580 / DSM 13 / JCM 2505 / CCUG 7422 / NBRC 12200 / NCIMB 9375 / NCTC 10341 / NRRL NRS-1264 / Gibson 46).